The sequence spans 387 residues: Protein-glutamate methylesterase/protein-glutamine glutaminase 2 (387 aa).

The Response regulatory domain maps to 4–121; that stretch reads KVLVVDDSGF…SRNPQKVKQL (118 aa). D55 bears the 4-aspartylphosphate mark. Residues 148-183 are compositionally biased toward low complexity; it reads AAPAAPTSSSRAPAPTTAPARAVPTRTAAPATAPAA. The interval 148–199 is disordered; the sequence is AAPAAPTSSSRAPAPTTAPARAVPTRTAAPATAPAAHAHHAPAHPTTSGTPK. A CheB-type methylesterase domain is found at 192 to 384; that stretch reads PTTSGTPKRK…LDDIGRHLVE (193 aa). Residues S211, H238, and D331 contribute to the active site.

This sequence belongs to the CheB family. Post-translationally, phosphorylated by CheA. Phosphorylation of the N-terminal regulatory domain activates the methylesterase activity.

The protein localises to the cytoplasm. It carries out the reaction [protein]-L-glutamate 5-O-methyl ester + H2O = L-glutamyl-[protein] + methanol + H(+). The enzyme catalyses L-glutaminyl-[protein] + H2O = L-glutamyl-[protein] + NH4(+). Its function is as follows. Involved in chemotaxis. Part of a chemotaxis signal transduction system that modulates chemotaxis in response to various stimuli. Catalyzes the demethylation of specific methylglutamate residues introduced into the chemoreceptors (methyl-accepting chemotaxis proteins or MCP) by CheR. Also mediates the irreversible deamidation of specific glutamine residues to glutamic acid. This is Protein-glutamate methylesterase/protein-glutamine glutaminase 2 from Pseudomonas savastanoi pv. phaseolicola (strain 1448A / Race 6) (Pseudomonas syringae pv. phaseolicola (strain 1448A / Race 6)).